A 214-amino-acid chain; its full sequence is MEYNVKTFKEMLIEENSRHNLVSRKSLPVELEKHIEDSRSLLNFMDLKGSRVVDIGSGAGFPGLVLAIYCPEGEFLLLESDLKKTEFLQAVINRCGLKNCQVLRKRIEEVGRSELRNSFDFCSCRALAMMNIVLEYGLPLLRLGGKLLLWKGKNYSREIEQAANALDILGGKVVDIFTYSLMAERDRAIVVVEKERDTPAKYPRRVGIPAKRPL.

S-adenosyl-L-methionine is bound by residues G56, F61, 107 to 108 (IE), and R125.

The protein belongs to the methyltransferase superfamily. RNA methyltransferase RsmG family.

Its subcellular location is the cytoplasm. Specifically methylates the N7 position of a guanine in 16S rRNA. The sequence is that of Ribosomal RNA small subunit methyltransferase G from Syntrophomonas wolfei subsp. wolfei (strain DSM 2245B / Goettingen).